The primary structure comprises 551 residues: PA-phosphatase related-family protein DDB_G0268928 (551 aa).

Composition is skewed to polar residues over residues 26–47 and 137–152; these read TESL…SGKD and KYNT…SSNK. Disordered regions lie at residues 26 to 50 and 123 to 172; these read TESL…DYSS and KGED…NNNN. Residues 153–171 show a composition bias toward low complexity; the sequence is TQTTVLNNSTTSSNNINNN. The next 7 membrane-spanning stretches (helical) occupy residues 211 to 231, 232 to 252, 273 to 293, 346 to 366, 393 to 413, 474 to 494, and 500 to 520; these read SYSD…SIIY, SLLV…LVFI, LAVG…AVVL, ILQL…IYIL, MFIC…LIFP, ILPA…IATM, and YFVD…YGGF.

This sequence belongs to the PA-phosphatase related phosphoesterase family.

The protein localises to the membrane. The sequence is that of PA-phosphatase related-family protein DDB_G0268928 from Dictyostelium discoideum (Social amoeba).